Here is a 437-residue protein sequence, read N- to C-terminus: GTPase Obg (437 aa).

Positions 2–160 (SMFLDTAKIS…RELQLELKIL (159 aa)) constitute an Obg domain. The interval 127 to 146 (GNIRFATPRNPAPEIAENGE) is disordered. Residues 161-338 (ADVGLVGFPS…LLEATAELLD (178 aa)) form the OBG-type G domain. Residues 167-174 (GFPSVGKS), 192-196 (FTTIV), 214-217 (DLPG), 284-287 (NKMD), and 319-321 (SSL) contribute to the GTP site. S174 and T194 together coordinate Mg(2+). Positions 359 to 437 (GFNEEERPFE…IGNFEFEFVD (79 aa)) constitute an OCT domain.

The protein belongs to the TRAFAC class OBG-HflX-like GTPase superfamily. OBG GTPase family. In terms of assembly, monomer. Mg(2+) is required as a cofactor.

It is found in the cytoplasm. Functionally, an essential GTPase which binds GTP, GDP and possibly (p)ppGpp with moderate affinity, with high nucleotide exchange rates and a fairly low GTP hydrolysis rate. Plays a role in control of the cell cycle, stress response, ribosome biogenesis and in those bacteria that undergo differentiation, in morphogenesis control. This Streptococcus thermophilus (strain ATCC BAA-491 / LMD-9) protein is GTPase Obg.